Here is a 188-residue protein sequence, read N- to C-terminus: Quinone reductase (188 aa).

FMN is bound by residues 13 to 20 (SLRKGSFN), 82 to 85 (EYNY), and Ser117.

Belongs to the SsuE family. As to quaternary structure, homotetramer. Dimer of dimers. The tetrameric configuration has a central role in chromate reductase activity. Requires FMN as cofactor.

The catalysed reaction is a quinone + NADH + H(+) = a quinol + NAD(+). The enzyme catalyses a quinone + NADPH + H(+) = a quinol + NADP(+). It carries out the reaction Cr(6+) + 2 NADH + O2 = Cr(3+) + superoxide + 2 NAD(+) + 2 H(+). It catalyses the reaction Cr(6+) + 2 NADPH + O2 = Cr(3+) + superoxide + 2 NADP(+) + 2 H(+). Catalyzes the reduction of quinones. Acts by simultaneous two-electron transfer, avoiding formation of highly reactive semiquinone intermediates and producing quinols that promote tolerance of H(2)O(2). Quinone reduction is probably the primary biological role of ChrR. Can also reduce toxic chromate to insoluble and less toxic Cr(3+). Catalyzes the transfer of three electrons to Cr(6+) producing Cr(3+) and one electron to molecular oxygen without producing the toxic Cr(5+) species and only producing a minimal amount of reactive oxygen species (ROS). Chromate reduction protects the cell against chromate toxicity, but is likely a secondary activity. This is Quinone reductase (chrR) from Escherichia coli O157:H7.